Reading from the N-terminus, the 421-residue chain is Testin (421 aa).

The PET domain maps to 92–199; that stretch reads MILTNPVAAK…GDVKLPCEMD (108 aa). Residues 133-164 are disordered; the sequence is EKQPVAGSEGAQYRKKQLAKQLPAHDQDPSKC. The span at 155–164 shows a compositional bias: basic and acidic residues; the sequence is PAHDQDPSKC. LIM zinc-binding domains follow at residues 234–297, 299–359, and 362–421; these read YSCY…CDSE, PRCA…NHAV, and QGCH…KMMS.

It belongs to the prickle / espinas / testin family. Interacts via LIM domain 1 with ZYX. Interacts (via LIM domain 3) with ENAH and VASP. Interacts with ALKBH4, talin, actin, alpha-actinin, GRIP1 and PXN. Interacts (via LIM domain 2) with ACTL7A (via N-terminus). Heterodimer with ACTL7A; the heterodimer interacts with ENAH to form a heterotrimer.

It localises to the cytoplasm. The protein resides in the cell junction. It is found in the focal adhesion. In terms of biological role, scaffold protein that may play a role in cell adhesion, cell spreading and in the reorganization of the actin cytoskeleton. Plays a role in the regulation of cell proliferation. May act as a tumor suppressor. In Ateles geoffroyi (Black-handed spider monkey), this protein is Testin (TES).